We begin with the raw amino-acid sequence, 391 residues long: Acetyl-CoA acetyltransferase (391 aa).

Cys-88 functions as the Acyl-thioester intermediate in the catalytic mechanism. Catalysis depends on proton acceptor residues His-347 and Cys-377.

Belongs to the thiolase-like superfamily. Thiolase family. As to quaternary structure, homotetramer.

It localises to the cytoplasm. The catalysed reaction is 2 acetyl-CoA = acetoacetyl-CoA + CoA. The protein operates within metabolic intermediate biosynthesis; (R)-mevalonate biosynthesis; (R)-mevalonate from acetyl-CoA: step 1/3. The protein is Acetyl-CoA acetyltransferase (phaA) of Paracoccus denitrificans.